Reading from the N-terminus, the 394-residue chain is Elongation factor Tu (394 aa).

Residues 10–204 enclose the tr-type G domain; the sequence is KPHVNIGTIG…AVDSYIPQPV (195 aa). Residues 19-26 form a G1 region; it reads GHVDHGKT. 19-26 provides a ligand contact to GTP; sequence GHVDHGKT. Residue Thr26 coordinates Mg(2+). The segment at 60-64 is G2; that stretch reads GITIS. The G3 stretch occupies residues 81 to 84; that stretch reads DCPG. GTP-binding positions include 81–85 and 136–139; these read DCPGH and NKVD. The interval 136–139 is G4; that stretch reads NKVD. The tract at residues 174–176 is G5; the sequence is SAL.

This sequence belongs to the TRAFAC class translation factor GTPase superfamily. Classic translation factor GTPase family. EF-Tu/EF-1A subfamily. Monomer.

It localises to the cytoplasm. It carries out the reaction GTP + H2O = GDP + phosphate + H(+). Its function is as follows. GTP hydrolase that promotes the GTP-dependent binding of aminoacyl-tRNA to the A-site of ribosomes during protein biosynthesis. This is Elongation factor Tu from Rickettsia canadensis (strain McKiel).